The sequence spans 118 residues: UPF0102 protein Francci3_3586 (118 aa).

Belongs to the UPF0102 family.

This chain is UPF0102 protein Francci3_3586, found in Frankia casuarinae (strain DSM 45818 / CECT 9043 / HFP020203 / CcI3).